Consider the following 256-residue polypeptide: MVKSHIGSWILVLFVAMWSDVGLCKKRPKPGGGWNTGGSRYPGQGSPGGNRYPPQGAGGWGQPHGGGWGQPHGGGWGQPHGGGWGQPHGGGGWGQGGTHNQWNKPSKPKTNMKHVAGAAAAGAVVGGLGGYMLGSAMSRPLIHFGNDYEDRYYRENMYRYPNQVYYRPVDQYSNQNNFVHDCVNITVKQHTVTTTTKGENFTETDIKIMERVVEQMCITQYQRESQAYYQRGASVILFSSPPVILLISFLIFLIVG.

The first 24 residues, 1 to 24 (MVKSHIGSWILVLFVAMWSDVGLC), serve as a signal peptide directing secretion. An interaction with GRB2, ERI3 and SYN1 region spans residues 25–233 (KKRPKPGGGW…ESQAYYQRGA (209 aa)). The disordered stretch occupies residues 28-110 (PKPGGGWNTG…QWNKPSKPKT (83 aa)). 5 tandem repeats follow at residues 54–62 (PQGAGGWGQ), 63–70 (PHGGGWGQ), 71–78 (PHGGGWGQ), 79–86 (PHGGGWGQ), and 87–95 (PHGGGGWGQ). The segment at 54–95 (PQGAGGWGQPHGGGWGQPHGGGWGQPHGGGWGQPHGGGGWGQ) is 5 X 8 AA tandem repeats of P-H-G-G-G-W-G-Q. A compositionally biased stretch (gly residues) spans 56–97 (GAGGWGQPHGGGWGQPHGGGWGQPHGGGWGQPHGGGGWGQGG). His64, Gly65, Gly66, His72, Gly73, Gly74, His80, Gly81, Gly82, His88, Gly90, and Gly91 together coordinate Cu(2+). Cys182 and Cys217 form a disulfide bridge. N-linked (GlcNAc...) asparagine glycosylation is found at Asn184 and Asn200. The GPI-anchor amidated alanine moiety is linked to residue Ala233. The propeptide at 234–256 (SVILFSSPPVILLISFLIFLIVG) is removed in mature form.

This sequence belongs to the prion family. Monomer and homodimer. Has a tendency to aggregate into amyloid fibrils containing a cross-beta spine, formed by a steric zipper of superposed beta-strands. Soluble oligomers may represent an intermediate stage on the path to fibril formation. Copper binding may promote oligomerization. Interacts with GRB2, APP, ERI3/PRNPIP and SYN1. Mislocalized cytosolically exposed PrP interacts with MGRN1; this interaction alters MGRN1 subcellular location and causes lysosomal enlargement. Interacts with KIAA1191.

It is found in the cell membrane. It localises to the golgi apparatus. In terms of biological role, its primary physiological function is unclear. Has cytoprotective activity against internal or environmental stresses. May play a role in neuronal development and synaptic plasticity. May be required for neuronal myelin sheath maintenance. May play a role in iron uptake and iron homeostasis. Soluble oligomers are toxic to cultured neuroblastoma cells and induce apoptosis (in vitro). Association with GPC1 (via its heparan sulfate chains) targets PRNP to lipid rafts. Also provides Cu(2+) or Zn(2+) for the ascorbate-mediated GPC1 deaminase degradation of its heparan sulfate side chains. This is Major prion protein (PRNP) from Moschus chrysogaster (Alpine musk deer).